Reading from the N-terminus, the 333-residue chain is Endo-1,4-beta-xylanase (333 aa).

Positions 1–17 are cleaved as a signal peptide; that stretch reads MYLVAFMLLAILPTGYC. The GH10 domain occupies 18–330; sequence QLNTLAVRAG…KPAYQGIVDG (313 aa). Glu-147 acts as the Proton donor in catalysis. Glu-252 functions as the Nucleophile in the catalytic mechanism.

This sequence belongs to the glycosyl hydrolase 10 (cellulase F) family.

It localises to the secreted. It catalyses the reaction Endohydrolysis of (1-&gt;4)-beta-D-xylosidic linkages in xylans.. It participates in glycan degradation; xylan degradation. Has xylanase activity. Seems to be involved in the release of sugars from the hemicellulolytic fraction in the compost. This is Endo-1,4-beta-xylanase (xlnA) from Agaricus bisporus (White button mushroom).